The sequence spans 311 residues: N-acetylmuramic acid 6-phosphate etherase (311 aa).

An SIS domain is found at 66–230 (VVEAFEADGR…TTAAMVRLGK (165 aa)). The Proton donor role is filled by Glu94. Residue Glu125 is part of the active site.

Belongs to the GCKR-like family. MurNAc-6-P etherase subfamily. Homodimer.

It catalyses the reaction N-acetyl-D-muramate 6-phosphate + H2O = N-acetyl-D-glucosamine 6-phosphate + (R)-lactate. The protein operates within amino-sugar metabolism; N-acetylmuramate degradation. Functionally, specifically catalyzes the cleavage of the D-lactyl ether substituent of MurNAc 6-phosphate, producing GlcNAc 6-phosphate and D-lactate. In Salinibacter ruber (strain DSM 13855 / M31), this protein is N-acetylmuramic acid 6-phosphate etherase.